We begin with the raw amino-acid sequence, 556 residues long: Formate--tetrahydrofolate ligase (556 aa).

65–72 (TPAGEGKS) serves as a coordination point for ATP.

This sequence belongs to the formate--tetrahydrofolate ligase family.

It catalyses the reaction (6S)-5,6,7,8-tetrahydrofolate + formate + ATP = (6R)-10-formyltetrahydrofolate + ADP + phosphate. Its pathway is one-carbon metabolism; tetrahydrofolate interconversion. The chain is Formate--tetrahydrofolate ligase from Streptococcus pneumoniae serotype 4 (strain ATCC BAA-334 / TIGR4).